Consider the following 216-residue polypeptide: ATP-dependent Clp protease proteolytic subunit (216 aa).

Ser120 serves as the catalytic Nucleophile. His145 is an active-site residue.

It belongs to the peptidase S14 family. Fourteen ClpP subunits assemble into 2 heptameric rings which stack back to back to give a disk-like structure with a central cavity, resembling the structure of eukaryotic proteasomes.

It localises to the cytoplasm. The catalysed reaction is Hydrolysis of proteins to small peptides in the presence of ATP and magnesium. alpha-casein is the usual test substrate. In the absence of ATP, only oligopeptides shorter than five residues are hydrolyzed (such as succinyl-Leu-Tyr-|-NHMec, and Leu-Tyr-Leu-|-Tyr-Trp, in which cleavage of the -Tyr-|-Leu- and -Tyr-|-Trp bonds also occurs).. In terms of biological role, cleaves peptides in various proteins in a process that requires ATP hydrolysis. Has a chymotrypsin-like activity. Plays a major role in the degradation of misfolded proteins. The protein is ATP-dependent Clp protease proteolytic subunit of Cupriavidus necator (strain ATCC 17699 / DSM 428 / KCTC 22496 / NCIMB 10442 / H16 / Stanier 337) (Ralstonia eutropha).